We begin with the raw amino-acid sequence, 128 residues long: Large-conductance mechanosensitive channel (128 aa).

2 consecutive transmembrane segments (helical) span residues Phe11 to Gly31 and Gly70 to Val90.

The protein belongs to the MscL family. In terms of assembly, homopentamer.

It is found in the cell membrane. In terms of biological role, channel that opens in response to stretch forces in the membrane lipid bilayer. May participate in the regulation of osmotic pressure changes within the cell. This is Large-conductance mechanosensitive channel from Listeria innocua serovar 6a (strain ATCC BAA-680 / CLIP 11262).